The sequence spans 746 residues: Eukaryotic translation initiation factor 3 subunit B (746 aa).

The segment covering 1-11 (MAPSYEHLREA) has biased composition (basic and acidic residues). The segment at 1-20 (MAPSYEHLREADLDEDEFDE) is disordered. Residues 42–128 (TFVVIDGLPE…HTLRVNKLMD (87 aa)) enclose the RRM domain. WD repeat units lie at residues 195–234 (DRPN…RLGR), 247–294 (PQEN…RSFA), 307–346 (PRKH…LLDK), 349–386 (IKVE…IGSN), 458–500 (TIKD…FFCP), 517–560 (LDKR…EKPE), and 575–620 (ADHY…LREE).

It belongs to the eIF-3 subunit B family. Component of the eukaryotic translation initiation factor 3 (eIF-3) complex.

Its subcellular location is the cytoplasm. Functionally, RNA-binding component of the eukaryotic translation initiation factor 3 (eIF-3) complex, which is involved in protein synthesis of a specialized repertoire of mRNAs and, together with other initiation factors, stimulates binding of mRNA and methionyl-tRNAi to the 40S ribosome. The eIF-3 complex specifically targets and initiates translation of a subset of mRNAs involved in cell proliferation. This chain is Eukaryotic translation initiation factor 3 subunit B, found in Pyricularia oryzae (strain 70-15 / ATCC MYA-4617 / FGSC 8958) (Rice blast fungus).